The sequence spans 436 residues: G2/mitotic-specific cyclin-B (436 aa).

Polar residues predominate over residues 1 to 17 (MSTINNPLNIKTRSHSS). Positions 1–33 (MSTINNPLNIKTRSHSSMGGGMIMDENKVPKSS) are disordered.

Belongs to the cyclin family. Cyclin AB subfamily. In terms of assembly, interacts with the cdk1 protein kinase to form a serine/threonine kinase holoenzyme complex also known as maturation promoting factor (MPF). The cyclin subunit imparts substrate specificity to the complex.

Functionally, essential for the control of the cell cycle at the G2/M (mitosis) transition. This chain is G2/mitotic-specific cyclin-B (cycB), found in Dictyostelium discoideum (Social amoeba).